The sequence spans 99 residues: Putative regulatory protein Kole_1849 (99 aa).

This sequence belongs to the RemA family.

In Kosmotoga olearia (strain ATCC BAA-1733 / DSM 21960 / TBF 19.5.1), this protein is Putative regulatory protein Kole_1849.